We begin with the raw amino-acid sequence, 292 residues long: Shikimate dehydrogenase (NADP(+)) (292 aa).

Residues 22–24 (SLS) and Ser69 each bind shikimate. Lys73 serves as the catalytic Proton acceptor. Positions 94 and 111 each coordinate shikimate. Residues 135-139 (GVGGA) and Ile236 each bind NADP(+). Tyr238 provides a ligand contact to shikimate. Gly260 provides a ligand contact to NADP(+).

The protein belongs to the shikimate dehydrogenase family. In terms of assembly, homodimer.

It catalyses the reaction shikimate + NADP(+) = 3-dehydroshikimate + NADPH + H(+). The protein operates within metabolic intermediate biosynthesis; chorismate biosynthesis; chorismate from D-erythrose 4-phosphate and phosphoenolpyruvate: step 4/7. Functionally, involved in the biosynthesis of the chorismate, which leads to the biosynthesis of aromatic amino acids. Catalyzes the reversible NADPH linked reduction of 3-dehydroshikimate (DHSA) to yield shikimate (SA). The chain is Shikimate dehydrogenase (NADP(+)) from Streptococcus pyogenes serotype M18 (strain MGAS8232).